Reading from the N-terminus, the 92-residue chain is Small ribosomal subunit protein uS19 (92 aa).

It belongs to the universal ribosomal protein uS19 family.

In terms of biological role, protein S19 forms a complex with S13 that binds strongly to the 16S ribosomal RNA. This chain is Small ribosomal subunit protein uS19, found in Polynucleobacter asymbioticus (strain DSM 18221 / CIP 109841 / QLW-P1DMWA-1) (Polynucleobacter necessarius subsp. asymbioticus).